The primary structure comprises 237 residues: Mitochondrial inner membrane protease atp23 (237 aa).

Residues 1-18 (MSTSESSNNGSQPGNQDT) are compositionally biased toward polar residues. The disordered stretch occupies residues 1 to 24 (MSTSESSNNGSQPGNQDTGYIPGD). H136 lines the a divalent metal cation pocket. Residue E137 is part of the active site. A divalent metal cation is bound at residue H140.

It belongs to the peptidase M76 family.

It is found in the mitochondrion inner membrane. In terms of biological role, has a dual role in the assembly of mitochondrial ATPase. Acts as a protease that removes N-terminal residues of mitochondrial ATPase CF(0) subunit 6 at the intermembrane space side. Also involved in the correct assembly of the membrane-embedded ATPase CF(0) particle, probably mediating association of subunit 6 with the subunit 9 ring. The chain is Mitochondrial inner membrane protease atp23 (atp23) from Aspergillus niger (strain ATCC MYA-4892 / CBS 513.88 / FGSC A1513).